We begin with the raw amino-acid sequence, 418 residues long: Metacaspase-4 (418 aa).

Residues histidine 86 and cysteine 139 contribute to the active site. An S-nitrosocysteine modification is found at cysteine 139. Residues 153–172 (GESTKKEAEDEDESEESSSR) are disordered.

The protein belongs to the peptidase C14B family. Post-translationally, the two subunits are derived from the precursor sequence by an autocatalytic mechanism. In terms of tissue distribution, expressed in roots, cotyledons, leaves, cauline leaves, pollen and embryos.

It is found in the cytoplasm. The protein resides in the cytosol. With respect to regulation, activated by Ca(2+) which induces self-processing and accelerates the rate of the enzyme activity, but has no effect on Km. Functionally, cysteine protease that cleaves specifically after arginine or lysine residues. Does not cleave caspase-specific substrates. Plays a positive regulatory role in biotic and abiotic stress-induced programmed cell death. This is Metacaspase-4 (AMC4) from Arabidopsis thaliana (Mouse-ear cress).